The following is a 244-amino-acid chain: Krueppel-like factor 9 (244 aa).

Disordered stretches follow at residues 24-51 and 80-142; these read VPEH…GDPG and SVCS…SEKR. Basic and acidic residues predominate over residues 32–51; it reads DAERLRLPEREVTKEHGDPG. Ser-122 carries the post-translational modification Phosphoserine. 3 C2H2-type zinc fingers span residues 143–167, 173–197, and 203–225; these read HKCP…YRVH, FPCT…YRTH, and FRCP…ARRH.

This sequence belongs to the Sp1 C2H2-type zinc-finger protein family. Interacts with ZZEF1.

It is found in the nucleus. In terms of biological role, transcription factor that binds to GC box promoter elements. Selectively activates mRNA synthesis from genes containing tandem repeats of GC boxes but represses genes with a single GC box. Acts as an epidermal circadian transcription factor regulating keratinocyte proliferation. The sequence is that of Krueppel-like factor 9 (KLF9) from Sus scrofa (Pig).